The primary structure comprises 100 residues: Large ribosomal subunit protein uL23 (100 aa).

The protein belongs to the universal ribosomal protein uL23 family. As to quaternary structure, part of the 50S ribosomal subunit. Contacts protein L29, and trigger factor when it is bound to the ribosome.

Its function is as follows. One of the early assembly proteins it binds 23S rRNA. One of the proteins that surrounds the polypeptide exit tunnel on the outside of the ribosome. Forms the main docking site for trigger factor binding to the ribosome. This is Large ribosomal subunit protein uL23 from Proteus mirabilis (strain HI4320).